Here is a 349-residue protein sequence, read N- to C-terminus: Heat-inducible transcription repressor HrcA (349 aa).

The protein belongs to the HrcA family.

Negative regulator of class I heat shock genes (grpE-dnaK-dnaJ and groELS operons). Prevents heat-shock induction of these operons. The polypeptide is Heat-inducible transcription repressor HrcA (Lactobacillus acidophilus (strain ATCC 700396 / NCK56 / N2 / NCFM)).